The chain runs to 379 residues: Lipoyl synthase, mitochondrial (379 aa).

Positions 106, 111, 117, 137, 141, 144, and 352 each coordinate [4Fe-4S] cluster. The region spanning 122–341 (EHGTQTATIM…EERGNALGFL (220 aa)) is the Radical SAM core domain.

This sequence belongs to the radical SAM superfamily. Lipoyl synthase family. [4Fe-4S] cluster serves as cofactor.

It localises to the mitochondrion. It carries out the reaction [[Fe-S] cluster scaffold protein carrying a second [4Fe-4S](2+) cluster] + N(6)-octanoyl-L-lysyl-[protein] + 2 oxidized [2Fe-2S]-[ferredoxin] + 2 S-adenosyl-L-methionine + 4 H(+) = [[Fe-S] cluster scaffold protein] + N(6)-[(R)-dihydrolipoyl]-L-lysyl-[protein] + 4 Fe(3+) + 2 hydrogen sulfide + 2 5'-deoxyadenosine + 2 L-methionine + 2 reduced [2Fe-2S]-[ferredoxin]. It participates in protein modification; protein lipoylation via endogenous pathway; protein N(6)-(lipoyl)lysine from octanoyl-[acyl-carrier-protein]: step 2/2. In terms of biological role, catalyzes the radical-mediated insertion of two sulfur atoms into the C-6 and C-8 positions of the octanoyl moiety bound to the lipoyl domains of lipoate-dependent enzymes, thereby converting the octanoylated domains into lipoylated derivatives. The sequence is that of Lipoyl synthase, mitochondrial from Drosophila erecta (Fruit fly).